A 932-amino-acid chain; its full sequence is Progesterone receptor (932 aa).

An AF3; mediates transcriptional activation region spans residues 1-164 (MTELKAKGPR…PATQGVLSPL (164 aa)). The disordered stretch occupies residues 1-254 (MTELKAKGPR…GGAAAGGAAA (254 aa)). The segment at 1–565 (MTELKAKGPR…YSFESLPQKI (565 aa)) is modulating, Pro-Rich. Serine 20 is modified (phosphoserine). The LXXL motif 1 signature appears at 55 to 59 (LDGLL). The residue at position 81 (serine 81) is a Phosphoserine. Positions 88 to 103 (SRAEATRGAGGSSSSP) are enriched in low complexity. An LXXL motif 2 motif is present at residues 115–119 (LDTLL). A phosphoserine mark is found at serine 130 and serine 162. Positions 165–304 (MSRSGGKAGD…LATTVMDFIH (140 aa)) are mediates transcriptional transrepression. A Nuclear localization signal motif is present at residues 183 to 187 (KVLPQ). Phosphoserine is present on residues serine 190 and serine 213. The span at 220–231 (EVEEEDGSESED) shows a compositional bias: acidic residues. Low complexity predominate over residues 232-254 (SAGPLLKGKPRALGGAAAGGAAA). Serine 293 is modified (phosphoserine; by MAPK1). Residues 334-349 (AASAFAPPRSSPSASS) show a composition bias toward low complexity. The segment at 334 to 356 (AASAFAPPRSSPSASSTPVAVGD) is disordered. Serine 344 is subject to Phosphoserine; by MAPK. Lysine 387 participates in a covalent cross-link: Glycyl lysine isopeptide (Lys-Gly) (interchain with G-Cter in SUMO); alternate. Lysine 387 is covalently cross-linked (Glycyl lysine isopeptide (Lys-Gly) (interchain with G-Cter in ubiquitin); alternate). Disordered stretches follow at residues 414-451 (PDFP…SSAS) and 468-499 (PPQQ…STAA). The segment covering 417 to 432 (PLGPPPPLPPRAPPSR) has biased composition (pro residues). Residues 433–451 (PGEAAVTAAPASASVSSAS) show a composition bias toward low complexity. The tract at residues 455–545 (STLECILYKA…VYPPYLNYLR (91 aa)) is AF1; mediates transcriptional activation. The span at 470-480 (QQGPFAPPPSK) shows a compositional bias: pro residues. Residue lysine 530 forms a Glycyl lysine isopeptide (Lys-Gly) (interchain with G-Cter in SUMO) linkage. NR C4-type zinc fingers lie at residues 566-586 (CLIC…CGSC) and 602-626 (CAGR…LRKC). The segment at residues 566–638 (CLICGDEASG…AGMVLGGRKF (73 aa)) is a DNA-binding region (nuclear receptor). Serine 675 is subject to Phosphoserine. The 235-residue stretch at 678–912 (QDIQLIPPLI…EFPEMMSEVI (235 aa)) folds into the NR LBD domain. Residues 686-932 (LINLLMSIEP…MVKPLLFHKK (247 aa)) form an AF2; mediates transcriptional activation region. Position 765 (arginine 765) interacts with progesterone.

The protein belongs to the nuclear hormone receptor family. In terms of assembly, interacts with SMARD1 and UNC45A. Interacts with CUEDC2; the interaction promotes ubiquitination, decreases sumoylation, and represses transcriptional activity. Interacts with PIAS3; the interaction promotes sumoylation of PR in a hormone-dependent manner, inhibits DNA-binding, and alters nuclear export. Interacts with SP1; the interaction requires ligand-induced phosphorylation on Ser-344 by ERK1/2-MAPK. Interacts with PRMT2. Interacts with NCOA2 and NCOA1. Interacts with KLF9. Interacts with GTF2B. In terms of processing, phosphorylated on multiple serine sites. Several of these sites are hormone-dependent. Phosphorylation on Ser-293 is highly hormone-dependent and modulates ubiquitination and sumoylation on Lys-387. Phosphorylation on Ser-102 and Ser-344 also requires induction by hormone. Basal phosphorylation on Ser-81, Ser-162 and Ser-190 is increased in response to progesterone and can be phosphorylated in vitro by the CDK2-A1 complex. Phosphorylation at Ser-162 and Ser-293, but not at Ser-190, is impaired during the G(2)/M phase of the cell cycle. Phosphorylation on Ser-344 by ERK1/2 MAPK is required for interaction with SP1. Post-translationally, sumoylation is hormone-dependent and represses transcriptional activity. Sumoylation on all three sites is enhanced by PIAS3. Desumoylated by SENP1. Sumoylation on Lys-387, the main site of sumoylation, is repressed by ubiquitination on the same site, and modulated by phosphorylation at Ser-293. Ubiquitination is hormone-dependent and represses sumoylation on the same site. Promoted by MAPK-mediated phosphorylation on Ser-293. Ubiquitinated by UBR5, leading to its degradation: UBR5 specifically recognizes and binds ligand-bound PGR when it is not associated with coactivators (NCOAs). In presence of NCOAs, the UBR5-degron is not accessible, preventing its ubiquitination and degradation. In terms of processing, palmitoylated by ZDHHC7 and ZDHHC21. Palmitoylation is required for plasma membrane targeting and for rapid intracellular signaling via ERK and AKT kinases and cAMP generation.

The protein resides in the nucleus. It localises to the cytoplasm. In terms of biological role, the steroid hormones and their receptors are involved in the regulation of eukaryotic gene expression and affect cellular proliferation and differentiation in target tissues. Transcriptional activator of several progesteron-dependent promoters in a variety of cell types. Involved in activation of SRC-dependent MAPK signaling on hormone stimulation. In Hylobates lar (Lar gibbon), this protein is Progesterone receptor (PGR).